The following is a 420-amino-acid chain: Multiple sugar-binding protein (420 aa).

A signal peptide spans 1 to 22 (MKWYKKIGLLGIVGLTSVLLAA). Cys-23 is lipidated: N-palmitoyl cysteine. Residue Cys-23 is the site of S-diacylglycerol cysteine attachment.

It belongs to the bacterial solute-binding protein 1 family.

Its subcellular location is the cell membrane. Its function is as follows. Involved in a binding protein-dependent transport system responsible for the uptake of melibiose, raffinose and isomaltotriose. This chain is Multiple sugar-binding protein, found in Streptococcus mutans serotype c (strain ATCC 700610 / UA159).